The chain runs to 295 residues: Nucleotide-binding protein LSEI_0959 (295 aa).

12 to 19 is an ATP binding site; it reads GMSGAGKT. 62-65 provides a ligand contact to GTP; the sequence is DLRS.

The protein belongs to the RapZ-like family.

In terms of biological role, displays ATPase and GTPase activities. This is Nucleotide-binding protein LSEI_0959 from Lacticaseibacillus paracasei (strain ATCC 334 / BCRC 17002 / CCUG 31169 / CIP 107868 / KCTC 3260 / NRRL B-441) (Lactobacillus paracasei).